We begin with the raw amino-acid sequence, 346 residues long: Dihydroorotase (346 aa).

The Zn(2+) site is built by histidine 13 and histidine 15. Substrate is bound by residues 15–17 and asparagine 41; that span reads HLR. Lysine 99, histidine 136, and histidine 174 together coordinate Zn(2+). An N6-carboxylysine modification is found at lysine 99. Histidine 136 lines the substrate pocket. Residue leucine 219 coordinates substrate. Aspartate 247 serves as a coordination point for Zn(2+). The active site involves aspartate 247. Substrate-binding residues include histidine 251 and alanine 263.

It belongs to the metallo-dependent hydrolases superfamily. DHOase family. Class II DHOase subfamily. Homodimer. It depends on Zn(2+) as a cofactor.

The catalysed reaction is (S)-dihydroorotate + H2O = N-carbamoyl-L-aspartate + H(+). It participates in pyrimidine metabolism; UMP biosynthesis via de novo pathway; (S)-dihydroorotate from bicarbonate: step 3/3. Catalyzes the reversible cyclization of carbamoyl aspartate to dihydroorotate. This chain is Dihydroorotase, found in Rhizobium leguminosarum bv. trifolii (strain WSM2304).